Here is a 371-residue protein sequence, read N- to C-terminus: Aminomethyltransferase (371 aa).

It belongs to the GcvT family. In terms of assembly, the glycine cleavage system is composed of four proteins: P, T, L and H.

The enzyme catalyses N(6)-[(R)-S(8)-aminomethyldihydrolipoyl]-L-lysyl-[protein] + (6S)-5,6,7,8-tetrahydrofolate = N(6)-[(R)-dihydrolipoyl]-L-lysyl-[protein] + (6R)-5,10-methylene-5,6,7,8-tetrahydrofolate + NH4(+). Its function is as follows. The glycine cleavage system catalyzes the degradation of glycine. This chain is Aminomethyltransferase, found in Oceanobacillus iheyensis (strain DSM 14371 / CIP 107618 / JCM 11309 / KCTC 3954 / HTE831).